The following is a 156-amino-acid chain: Large ribosomal subunit protein uL15 (156 aa).

Over residues 1-13 the composition is skewed to basic and acidic residues; that stretch reads MKLNEIKDNEGAT. Residues 1–39 form a disordered region; it reads MKLNEIKDNEGATKNRKRLGRGIGSGSGKTAGRGVKGQK. Gly residues predominate over residues 21–35; sequence RGIGSGSGKTAGRGV.

The protein belongs to the universal ribosomal protein uL15 family. In terms of assembly, part of the 50S ribosomal subunit.

Binds to the 23S rRNA. This is Large ribosomal subunit protein uL15 from Rhizobium meliloti (strain 1021) (Ensifer meliloti).